Consider the following 353-residue polypeptide: uncharacterized protein (353 aa).

The signal sequence occupies residues 1–23; that stretch reads MSAGKGLLLVICLLFLPLKSAMA.

The protein to E.coli YqiI.

Its function is as follows. May be involved in a fimbrial system chaperoned by YbgP and exported by YbgQ. This is an uncharacterized protein from Escherichia coli (strain K12).